The following is a 496-amino-acid chain: Glycine receptor subunit beta (496 aa).

The signal sequence occupies residues 1 to 22 (MKFSLAVSFFILMSLLFEDACS). The Extracellular portion of the chain corresponds to 23 to 268 (KEKSSKKGKG…IFTLRRQVGF (246 aa)). N54 carries an N-linked (GlcNAc...) asparagine glycan. Residues R108 and S174 each contribute to the glycine site. A disulfide bond links C183 and C197. A glycan (N-linked (GlcNAc...) asparagine) is linked at N242. A disulfide bridge links C243 with C255. T250 is a binding site for glycine. A helical transmembrane segment spans residues 269-289 (YMMGVYAPTLLIVVLSWLSFW). Topologically, residues 290-294 (INPDA) are cytoplasmic. A helical transmembrane segment spans residues 295–315 (SAARVPLGIFSVLSLASECTT). Topologically, residues 316 to 327 (LAAELPKVSYVK) are extracellular. The chain crosses the membrane as a helical span at residues 328–349 (ALDVWLIACLLFGFASLVEYAV). Residues 350-471 (VQVMLNNPKR…KPVIPTAAKR (122 aa)) are Cytoplasmic-facing. A Phosphothreonine modification is found at T391. A helical transmembrane segment spans residues 472 to 495 (IDLYARALFPFCFLFFNVIYWSIY). Residue L496 is a topological domain, extracellular.

This sequence belongs to the ligand-gated ion channel (TC 1.A.9) family. Glycine receptor (TC 1.A.9.3) subfamily. GLRB sub-subfamily. Forms heteropentamers with glycin receptor alpha subunits. Heteropentamers with GLRA1 can be composed of two GLRA1 and three GLRB subunits, or three GLRA1 and two GLRB subunits, or four GLRA1 subunits and one GLRB subunit. Forms heteropentamers with GLRA2. Functional GLRB-GLRA2 heteropentamers contain four GLRA2 subunits and one GLRB subunit, although alternative subunit composition cannot be excluded. Forms a heteropentamer with GLRA3. Interacts with GPHN. Detected in spinal cord and brain stem (at protein level). Detected in spinal cord, cerebellum and brain cortex.

The protein resides in the postsynaptic cell membrane. It localises to the cell membrane. It is found in the synapse. The protein localises to the perikaryon. Its subcellular location is the cell projection. The protein resides in the dendrite. It localises to the cytoplasm. The enzyme catalyses chloride(in) = chloride(out). Channel opening is triggered by extracellular glycine. Heteropentameric channels composed of GLRB and GLRA1 are activated by lower glycine levels than homopentameric GLRA1. Functionally, subunit of heteromeric glycine-gated chloride channels. Plays an important role in the down-regulation of neuronal excitability. Contributes to the generation of inhibitory postsynaptic currents. The chain is Glycine receptor subunit beta (Glrb) from Rattus norvegicus (Rat).